A 269-amino-acid polypeptide reads, in one-letter code: Formamidopyrimidine-DNA glycosylase (269 aa).

Catalysis depends on Pro2, which acts as the Schiff-base intermediate with DNA. The active-site Proton donor is Glu3. Lys57 (proton donor; for beta-elimination activity) is an active-site residue. DNA-binding residues include His90, Arg109, and Lys150. The segment at 235–269 adopts an FPG-type zinc-finger fold; it reads QVYGRKGEPCRVCGTPIVASKHAQRATFYCRQCQK. The Proton donor; for delta-elimination activity role is filled by Arg259.

Belongs to the FPG family. Monomer. Requires Zn(2+) as cofactor.

It carries out the reaction Hydrolysis of DNA containing ring-opened 7-methylguanine residues, releasing 2,6-diamino-4-hydroxy-5-(N-methyl)formamidopyrimidine.. It catalyses the reaction 2'-deoxyribonucleotide-(2'-deoxyribose 5'-phosphate)-2'-deoxyribonucleotide-DNA = a 3'-end 2'-deoxyribonucleotide-(2,3-dehydro-2,3-deoxyribose 5'-phosphate)-DNA + a 5'-end 5'-phospho-2'-deoxyribonucleoside-DNA + H(+). Its function is as follows. Involved in base excision repair of DNA damaged by oxidation or by mutagenic agents. Acts as a DNA glycosylase that recognizes and removes damaged bases. Has a preference for oxidized purines, such as 7,8-dihydro-8-oxoguanine (8-oxoG). Has AP (apurinic/apyrimidinic) lyase activity and introduces nicks in the DNA strand. Cleaves the DNA backbone by beta-delta elimination to generate a single-strand break at the site of the removed base with both 3'- and 5'-phosphates. The chain is Formamidopyrimidine-DNA glycosylase from Enterobacter sp. (strain 638).